Consider the following 276-residue polypeptide: Pantothenate synthetase (276 aa).

Residue 26-33 (MGFLHAGH) coordinates ATP. H33 serves as the catalytic Proton donor. Position 57 (Q57) interacts with (R)-pantoate. Q57 provides a ligand contact to beta-alanine. ATP is bound at residue 143–146 (GQKD). Q149 contacts (R)-pantoate. ATP-binding positions include I172 and 180–183 (MSSR).

Belongs to the pantothenate synthetase family. In terms of assembly, homodimer.

The protein localises to the cytoplasm. The catalysed reaction is (R)-pantoate + beta-alanine + ATP = (R)-pantothenate + AMP + diphosphate + H(+). The protein operates within cofactor biosynthesis; (R)-pantothenate biosynthesis; (R)-pantothenate from (R)-pantoate and beta-alanine: step 1/1. Functionally, catalyzes the condensation of pantoate with beta-alanine in an ATP-dependent reaction via a pantoyl-adenylate intermediate. This is Pantothenate synthetase from Herpetosiphon aurantiacus (strain ATCC 23779 / DSM 785 / 114-95).